Reading from the N-terminus, the 1088-residue chain is RNA-directed RNA polymerase (1088 aa).

The 187-residue stretch at 501 to 687 (LSYGDVTRFL…AKRYIAGGKI (187 aa)) folds into the RdRp catalytic domain.

This sequence belongs to the reoviridae RNA-directed RNA polymerase family. In terms of assembly, interacts with VP3 (Potential). Interacts with VP2; this interaction activates VP1. Interacts with NSP5; this interaction is probably necessary for the formation of functional virus factories. Interacts with NSP2; this interaction is weak. The cofactor is Mg(2+).

It is found in the virion. It carries out the reaction RNA(n) + a ribonucleoside 5'-triphosphate = RNA(n+1) + diphosphate. In terms of biological role, RNA-directed RNA polymerase that is involved in both transcription and genome replication. Together with VP3 capping enzyme, forms an enzyme complex positioned near the channels situated at each of the five-fold vertices of the core. Following infection, the outermost layer of the virus is lost, leaving a double-layered particle (DLP) made up of the core and VP6 shell. VP1 then catalyzes the transcription of fully conservative plus-strand genomic RNAs that are extruded through the DLP's channels into the cytoplasm where they function as mRNAs for translation of viral proteins. One copy of each of the viral (+)RNAs is also recruited during core assembly, together with newly synthesized polymerase complexes and VP2. The polymerase of these novo-formed particles catalyzes the synthesis of complementary minus-strands leading to dsRNA formation. To do so, the polymerase specifically recognizes and binds 4 bases 5'-UGUG-3' in the conserved 3'-sequence of plus-strand RNA templates. VP2 presumably activates the autoinhibited VP1-RNA complex to coordinate packaging and genome replication. Once dsRNA synthesis is complete, the polymerase switches to the transcriptional mode, thus providing secondary transcription. In Chlorocebus pygerythrus (Vervet monkey), this protein is RNA-directed RNA polymerase.